The following is a 336-amino-acid chain: Holliday junction branch migration complex subunit RuvB (336 aa).

Positions 1-182 are large ATPase domain (RuvB-L); it reads MAKRMITTEL…FGVVHRLEFY (182 aa). ATP is bound by residues leucine 21, arginine 22, glycine 63, lysine 66, threonine 67, threonine 68, 129–131, arginine 172, tyrosine 182, and arginine 219; that span reads EDY. A Mg(2+)-binding site is contributed by threonine 67. Residues 183–253 form a small ATPAse domain (RuvB-S) region; it reads TTEELKEIIT…VARFALDILE (71 aa). A head domain (RuvB-H) region spans residues 256–336; sequence KLGLDHIDRQ…GLPYENKELS (81 aa). DNA-binding residues include arginine 311 and arginine 316.

The protein belongs to the RuvB family. In terms of assembly, homohexamer. Forms an RuvA(8)-RuvB(12)-Holliday junction (HJ) complex. HJ DNA is sandwiched between 2 RuvA tetramers; dsDNA enters through RuvA and exits via RuvB. An RuvB hexamer assembles on each DNA strand where it exits the tetramer. Each RuvB hexamer is contacted by two RuvA subunits (via domain III) on 2 adjacent RuvB subunits; this complex drives branch migration. In the full resolvosome a probable DNA-RuvA(4)-RuvB(12)-RuvC(2) complex forms which resolves the HJ.

Its subcellular location is the cytoplasm. The catalysed reaction is ATP + H2O = ADP + phosphate + H(+). Its function is as follows. The RuvA-RuvB-RuvC complex processes Holliday junction (HJ) DNA during genetic recombination and DNA repair, while the RuvA-RuvB complex plays an important role in the rescue of blocked DNA replication forks via replication fork reversal (RFR). RuvA specifically binds to HJ cruciform DNA, conferring on it an open structure. The RuvB hexamer acts as an ATP-dependent pump, pulling dsDNA into and through the RuvAB complex. RuvB forms 2 homohexamers on either side of HJ DNA bound by 1 or 2 RuvA tetramers; 4 subunits per hexamer contact DNA at a time. Coordinated motions by a converter formed by DNA-disengaged RuvB subunits stimulates ATP hydrolysis and nucleotide exchange. Immobilization of the converter enables RuvB to convert the ATP-contained energy into a lever motion, pulling 2 nucleotides of DNA out of the RuvA tetramer per ATP hydrolyzed, thus driving DNA branch migration. The RuvB motors rotate together with the DNA substrate, which together with the progressing nucleotide cycle form the mechanistic basis for DNA recombination by continuous HJ branch migration. Branch migration allows RuvC to scan DNA until it finds its consensus sequence, where it cleaves and resolves cruciform DNA. In Lachnoclostridium phytofermentans (strain ATCC 700394 / DSM 18823 / ISDg) (Clostridium phytofermentans), this protein is Holliday junction branch migration complex subunit RuvB.